The sequence spans 161 residues: 3-isopropylmalate dehydratase small subunit 1 (161 aa).

Belongs to the LeuD family. LeuD type 2 subfamily. Heterodimer of LeuC and LeuD.

It carries out the reaction (2R,3S)-3-isopropylmalate = (2S)-2-isopropylmalate. It functions in the pathway amino-acid biosynthesis; L-leucine biosynthesis; L-leucine from 3-methyl-2-oxobutanoate: step 2/4. Its function is as follows. Catalyzes the isomerization between 2-isopropylmalate and 3-isopropylmalate, via the formation of 2-isopropylmaleate. In Archaeoglobus fulgidus (strain ATCC 49558 / DSM 4304 / JCM 9628 / NBRC 100126 / VC-16), this protein is 3-isopropylmalate dehydratase small subunit 1 (leuD1).